Consider the following 713-residue polypeptide: Phenylalanine--tRNA ligase beta subunit (713 aa).

One can recognise a tRNA-binding domain in the interval 39 to 153 (IRHVENIKYG…EANLNEDPIA (115 aa)). The B5 domain occupies 379-454 (LKPKEILFDH…RFYGYDNFPI (76 aa)). Mg(2+)-binding residues include D432, D438, E441, and E442.

It belongs to the phenylalanyl-tRNA synthetase beta subunit family. Type 1 subfamily. As to quaternary structure, tetramer of two alpha and two beta subunits. Mg(2+) is required as a cofactor.

The protein resides in the cytoplasm. It catalyses the reaction tRNA(Phe) + L-phenylalanine + ATP = L-phenylalanyl-tRNA(Phe) + AMP + diphosphate + H(+). The chain is Phenylalanine--tRNA ligase beta subunit from Mycoplasma mobile (strain ATCC 43663 / 163K / NCTC 11711) (Mesomycoplasma mobile).